A 409-amino-acid polypeptide reads, in one-letter code: MDFYSNLDSRSLDSETPTLFEIISAQELEKLLTPSIRYILVHYTQRYPRYLLKVANHFDELNLAIRGFIEFRQLSHWNSTFIDKFYGLKKVRNHQTISTERLQSQVPTLLEQRRRLSKTQIAVSLFEIVGVPYLRDKLDHLYDKLYPKLMMNNLDPKESLKTFVQYYFLKLYPILLSVLTTIQVLLQVLYLSGTFKSPSIIMWLFKMKYARLNSYDYTLDEQRVNKFLNKTSPGKLGTGNNRIRPITLTESLYLLYSDLTRPLKKGLLITGGTLFPASIFLLKFLEWWNSSDFATKMNKPRNPFSDSELPPPINLSKDLLADRKIKKLLKKSQSNDGTCPLCHKQITNPAVIETGYVFCYTCIFKHLTSSELDEETGGRCPITGRRLLGCRINKTTGEWTVDGIRRLMM.

Over 1–18 (MDFYSNLDSRSLDSETPT) the chain is Peroxisomal matrix. Residues 19-46 (LFEIISAQELEKLLTPSIRYILVHYTQR) traverse the membrane as a helical segment. At 47–50 (YPRY) the chain is on the cytoplasmic side. The chain crosses the membrane as a helical span at residues 51–75 (LLKVANHFDELNLAIRGFIEFRQLS). At 76 to 117 (HWNSTFIDKFYGLKKVRNHQTISTERLQSQVPTLLEQRRRLS) the chain is on the peroxisomal matrix side. A helical transmembrane segment spans residues 118–152 (KTQIAVSLFEIVGVPYLRDKLDHLYDKLYPKLMMN). Residues 153-155 (NLD) are Cytoplasmic-facing. A helical transmembrane segment spans residues 156–192 (PKESLKTFVQYYFLKLYPILLSVLTTIQVLLQVLYLS). The Peroxisomal matrix portion of the chain corresponds to 193–273 (GTFKSPSIIM…KKGLLITGGT (81 aa)). A helical transmembrane segment spans residues 274–301 (LFPASIFLLKFLEWWNSSDFATKMNKPR). The Cytoplasmic portion of the chain corresponds to 302–409 (NPFSDSELPP…TVDGIRRLMM (108 aa)). 4 residues coordinate Zn(2+): cysteine 339, cysteine 342, cysteine 359, and cysteine 362. The RING-type; degenerate zinc-finger motif lies at 339–384 (CPLCHKQITNPAVIETGYVFCYTCIFKHLTSSELDEETGGRCPITG).

The protein belongs to the pex2/pex10/pex12 family. In terms of assembly, component of the PEX2-PEX10-PEX12 retrotranslocation channel, composed of PEX2, PEX10 and PEX12.

It localises to the peroxisome membrane. The protein operates within protein modification; protein ubiquitination. Functionally, component of a retrotranslocation channel required for peroxisome organization by mediating export of the PEX5 and/or PEX20 receptors from peroxisomes to the cytosol, thereby promoting PEX5 and PEX20 recycling. The retrotranslocation channel is composed of PEX2, PEX10 and PEX12; each subunit contributing transmembrane segments that coassemble into an open channel that specifically allows the passage of PEX5 and/or PEX20 through the peroxisomal membrane. PEX12 also regulates PEX5 and/or PEX20 recycling by activating the E3 ubiquitin-protein ligase activity of PEX10. When PEX5 or PEX20 recycling is compromised, PEX12 stimulates PEX10-mediated polyubiquitination of PEX5 and/or PEX20, leading to its subsequent degradation. The protein is Peroxisome assembly protein 12 (PEX12) of Komagataella pastoris (Yeast).